The chain runs to 616 residues: 1-deoxy-D-xylulose-5-phosphate synthase (616 aa).

Residues H74 and 115–117 (GHS) each bind thiamine diphosphate. D146 provides a ligand contact to Mg(2+). Thiamine diphosphate is bound by residues 147 to 148 (GA), N175, Y282, and E365. Residue N175 participates in Mg(2+) binding.

Belongs to the transketolase family. DXPS subfamily. Homodimer. The cofactor is Mg(2+). It depends on thiamine diphosphate as a cofactor.

The enzyme catalyses D-glyceraldehyde 3-phosphate + pyruvate + H(+) = 1-deoxy-D-xylulose 5-phosphate + CO2. It participates in metabolic intermediate biosynthesis; 1-deoxy-D-xylulose 5-phosphate biosynthesis; 1-deoxy-D-xylulose 5-phosphate from D-glyceraldehyde 3-phosphate and pyruvate: step 1/1. Its function is as follows. Catalyzes the acyloin condensation reaction between C atoms 2 and 3 of pyruvate and glyceraldehyde 3-phosphate to yield 1-deoxy-D-xylulose-5-phosphate (DXP). The polypeptide is 1-deoxy-D-xylulose-5-phosphate synthase (Chromobacterium violaceum (strain ATCC 12472 / DSM 30191 / JCM 1249 / CCUG 213 / NBRC 12614 / NCIMB 9131 / NCTC 9757 / MK)).